Reading from the N-terminus, the 209-residue chain is MYDPVSTAMNLVPMVVEQTSRGERAFDIFSRLLKERIIFLTGPVEDGMASLICAQLLFLESENPKKEIAMYINSPGGVVTAGLAIYDTMQYIKSPVSTVCMGMAASMGSLLLAAGAAGQRISLPNARIMVHQPSGGFRGQASDIERHAEDIIKTKRRLNEIYVKHCGRTYEEVERTLDRDHFMSADEAKAWGLVDHVYDSRDAAEAGAE.

The active-site Nucleophile is the serine 106. The active site involves histidine 131.

Belongs to the peptidase S14 family. In terms of assembly, fourteen ClpP subunits assemble into 2 heptameric rings which stack back to back to give a disk-like structure with a central cavity, resembling the structure of eukaryotic proteasomes.

The protein resides in the cytoplasm. It carries out the reaction Hydrolysis of proteins to small peptides in the presence of ATP and magnesium. alpha-casein is the usual test substrate. In the absence of ATP, only oligopeptides shorter than five residues are hydrolyzed (such as succinyl-Leu-Tyr-|-NHMec, and Leu-Tyr-Leu-|-Tyr-Trp, in which cleavage of the -Tyr-|-Leu- and -Tyr-|-Trp bonds also occurs).. Cleaves peptides in various proteins in a process that requires ATP hydrolysis. Has a chymotrypsin-like activity. Plays a major role in the degradation of misfolded proteins. The protein is ATP-dependent Clp protease proteolytic subunit of Caulobacter vibrioides (strain ATCC 19089 / CIP 103742 / CB 15) (Caulobacter crescentus).